Consider the following 252-residue polypeptide: Trans-aconitate 2-methyltransferase (252 aa).

It belongs to the methyltransferase superfamily. Tam family.

The protein localises to the cytoplasm. The catalysed reaction is trans-aconitate + S-adenosyl-L-methionine = (E)-3-(methoxycarbonyl)pent-2-enedioate + S-adenosyl-L-homocysteine. In terms of biological role, catalyzes the S-adenosylmethionine monomethyl esterification of trans-aconitate. The sequence is that of Trans-aconitate 2-methyltransferase from Escherichia coli O17:K52:H18 (strain UMN026 / ExPEC).